A 153-amino-acid polypeptide reads, in one-letter code: SsrA-binding protein (153 aa).

Belongs to the SmpB family.

It is found in the cytoplasm. Required for rescue of stalled ribosomes mediated by trans-translation. Binds to transfer-messenger RNA (tmRNA), required for stable association of tmRNA with ribosomes. tmRNA and SmpB together mimic tRNA shape, replacing the anticodon stem-loop with SmpB. tmRNA is encoded by the ssrA gene; the 2 termini fold to resemble tRNA(Ala) and it encodes a 'tag peptide', a short internal open reading frame. During trans-translation Ala-aminoacylated tmRNA acts like a tRNA, entering the A-site of stalled ribosomes, displacing the stalled mRNA. The ribosome then switches to translate the ORF on the tmRNA; the nascent peptide is terminated with the 'tag peptide' encoded by the tmRNA and targeted for degradation. The ribosome is freed to recommence translation, which seems to be the essential function of trans-translation. The sequence is that of SsrA-binding protein from Macrococcus caseolyticus (strain JCSC5402) (Macrococcoides caseolyticum).